We begin with the raw amino-acid sequence, 249 residues long: Probable transcriptional regulatory protein GOX1679 (249 aa).

It belongs to the TACO1 family.

Its subcellular location is the cytoplasm. The protein is Probable transcriptional regulatory protein GOX1679 of Gluconobacter oxydans (strain 621H) (Gluconobacter suboxydans).